A 200-amino-acid polypeptide reads, in one-letter code: MATPEEVAYEKFLERVRRTVYVDELTPLATAPVISSAFNQFGTVKKVSFIPNYLGPKELPMGVLVEMENEEMTQAVISTVSQLPFMVAGMPRPVRACAAEPNMFVDKPKKPGRTVRFRWIKPNDPDFDKARRVKRLARKHSAENSFMLKKQLEEAEKLSKQQAETAVTHHKKFEMMDKLLYDGVAQKLAGRYDLKGFPYR.

In terms of domain architecture, RRM spans 18–101 (RTVYVDELTP…RPVRACAAEP (84 aa)).

Component of the ASI1-AIPP1-EDM2 (AAE) RNA regulatory complex composed of at least AIPP1/EDM3, ASI1 and EDM2 and may contain CPL2, AIPP2 and AIPP3/BDT1. Binds directly to ASI1 and EDM2 and may function as a bridge protein between them. Co-associates with EDM2 to histone H3 lysine 9 dimethylation (H3K9me2)-marked chromatin and transcripts at a critical proximal polyadenylation site of RPP7 to hamper proximal transcript polyadeylation/termination.

It is found in the nucleus. Functionally, prevents gene silencing by suppressing CHG methylation as well as histone H3 lysine 9 dimethylation (H3K9me2) status at target loci. Collaboratively with ASI1 and EDM2, the AAE complex regulates alternative RNA processing (e.g. alternative splicing) and epigenetic silencing (e.g. H3K9me2) of intronic heterochromatin-containing genes as well as genic heterochromatin-containing genes by promoting distal 3' polyadenylation, thus being required for the accumulation of their full-length transcripts. May also modulate transposable elements (TE) expression. Mediates RPP7-dependent race-specific disease resistance by promoting histone H3 lysine 9 dimethylation (H3K9me2) at the proximal RPP7 polyadenylation site, thus controlling alternative polyadenylation of RPP7 immune receptor transcripts and facilitating 2-phosphoserine RNAPII occupancy. In cv. Columbia, required for RPP7-dependent disease resistance against the Hyaloperonospora arabidopsidis isolate Hiks1. This chain is ASI1-immunoprecipitated protein 1, found in Arabidopsis thaliana (Mouse-ear cress).